The sequence spans 35 residues: uncharacterized protein (35 aa).

The chain crosses the membrane as a helical span at residues 14-34 (VVVLLAICGAMLLLRWAAMIW).

It localises to the membrane. This is an uncharacterized protein from Escherichia coli (strain K12).